The following is a 1486-amino-acid chain: Chromosome partition protein MukB (1486 aa).

Position 34–41 (34–41) interacts with ATP; it reads GGNGAGKS. 3 coiled-coil regions span residues 326–418, 444–480, and 509–603; these read LEAD…QYNQ, LETF…QAYQ, and RHLA…RAPV. The tract at residues 666 to 783 is flexible hinge; it reads PGGSEDQRLN…EVPLFGRAAR (118 aa). Coiled-coil stretches lie at residues 835–923, 977–1115, and 1209–1266; these read EAEI…AKLE, EMLS…TAKA, and VEAI…QNVS.

Belongs to the SMC family. MukB subfamily. Homodimerization via its hinge domain. Binds to DNA via its C-terminal region. Interacts, and probably forms a ternary complex, with MukE and MukF via its C-terminal region. The complex formation is stimulated by calcium or magnesium. Interacts with tubulin-related protein FtsZ.

The protein resides in the cytoplasm. Its subcellular location is the nucleoid. In terms of biological role, plays a central role in chromosome condensation, segregation and cell cycle progression. Functions as a homodimer, which is essential for chromosome partition. Involved in negative DNA supercoiling in vivo, and by this means organize and compact chromosomes. May achieve or facilitate chromosome segregation by condensation DNA from both sides of a centrally located replisome during cell division. In Escherichia coli O17:K52:H18 (strain UMN026 / ExPEC), this protein is Chromosome partition protein MukB.